The chain runs to 190 residues: Voltage-dependent calcium channel gamma-like subunit (190 aa).

The next 4 helical transmembrane spans lie at 25 to 45 (FIRT…SVSI), 96 to 116 (ALAV…QLCE), 131 to 151 (LLVS…LLRN), and 155 to 175 (LIGF…LFLN).

Belongs to the PMP-22/EMP/MP20 family. CACNG subfamily. The L-type calcium channel is composed of five subunits: alpha-1, alpha-2/delta, beta and gamma.

It localises to the membrane. Its function is as follows. Thought to stabilize the calcium channel in an inactivated (closed) state. Modulates calcium current when coexpressed with CACNA1G. The polypeptide is Voltage-dependent calcium channel gamma-like subunit (Homo sapiens (Human)).